A 197-amino-acid polypeptide reads, in one-letter code: Rac-like GTP-binding protein ARAC11 (197 aa).

13 to 20 (GDGAVGKT) contributes to the GTP binding site. An Effector region motif is present at residues 35–43 (YVPTVFDNF). GTP is bound by residues 60-64 (DTAGQ) and 118-121 (TKLD). Cys194 bears the Cysteine methyl ester mark. Cys194 carries the S-geranylgeranyl cysteine lipid modification. Positions 195–197 (SIL) are cleaved as a propeptide — removed in mature form.

This sequence belongs to the small GTPase superfamily. Rho family. As to quaternary structure, part of a complex containing ROPGEF1 and PRK2. Interacts with UGT1, ICR1, ICR2, ICR3, ICR4 and ICR5. Interacts with PHIP1 when activated by GTP. In terms of tissue distribution, exclusively expressed in mature pollen and pollen tubes.

It is found in the cytoplasm. The protein localises to the membrane. The enzyme catalyses GTP + H2O = GDP + phosphate + H(+). May be involved in cell polarity control during the actin-dependent tip growth of pollen tubes. May regulate callose synthase 1 (CALS1) activity through the interaction with UGT1. Functionally, inactive GDP-bound Rho GTPases reside in the cytosol, are found in a complex with Rho GDP-dissociation inhibitors (Rho GDIs), and are released from the GDI protein in order to translocate to membranes upon activation. The chain is Rac-like GTP-binding protein ARAC11 from Arabidopsis thaliana (Mouse-ear cress).